Here is a 264-residue protein sequence, read N- to C-terminus: Virulence plasmid protein pGP3-D (264 aa).

This is Virulence plasmid protein pGP3-D from Chlamydia muridarum (strain MoPn / Nigg).